A 700-amino-acid polypeptide reads, in one-letter code: Calpain-2 catalytic subunit (700 aa).

An N-acetylalanine modification is found at A2. The propeptide at A2–G19 is anchors to the small subunit. The Calpain catalytic domain occupies L45–T344. Positions 89, 91, and 96 each coordinate Ca(2+). The active site involves C105. Ca(2+) contacts are provided by E175, Q229, and K230. Catalysis depends on residues H262 and N286. Ca(2+)-binding residues include E292, D299, Q319, and E323. The segment at P345–D514 is domain III. The linker stretch occupies residues E515 to D529. Positions I530 to L700 are domain IV. Ca(2+) contacts are provided by A542, D545, E547, E552, D585, D587, S589, K591, E596, D615, D617, S619, T621, E626, D658, and N661. EF-hand domains are found at residues F572–Q605 and T602–K637.

Belongs to the peptidase C2 family. In terms of assembly, forms a heterodimer with a small (regulatory) subunit (CAPNS1). Interacts with CPEB3; this leads to cleavage of CPEB3. Requires Ca(2+) as cofactor. In terms of tissue distribution, ubiquitous.

The protein localises to the cytoplasm. Its subcellular location is the cell membrane. The enzyme catalyses Broad endopeptidase specificity.. Its activity is regulated as follows. Activated by 200-1000 micromolar concentrations of calcium and inhibited by calpastatin. Functionally, calcium-regulated non-lysosomal thiol-protease which catalyzes limited proteolysis of substrates involved in cytoskeletal remodeling and signal transduction. Proteolytically cleaves MYOC at 'Arg-226'. Proteolytically cleaves CPEB3 following neuronal stimulation which abolishes CPEB3 translational repressor activity, leading to translation of CPEB3 target mRNAs. The sequence is that of Calpain-2 catalytic subunit (Capn2) from Mus musculus (Mouse).